The following is a 315-amino-acid chain: tRNA dimethylallyltransferase (315 aa).

13-20 (GPTAVGKT) is an ATP binding site. 15–20 (TAVGKT) contributes to the substrate binding site. Residues 38–41 (DSMQ) form an interaction with substrate tRNA region.

Belongs to the IPP transferase family. Monomer. Mg(2+) is required as a cofactor.

It catalyses the reaction adenosine(37) in tRNA + dimethylallyl diphosphate = N(6)-dimethylallyladenosine(37) in tRNA + diphosphate. Its function is as follows. Catalyzes the transfer of a dimethylallyl group onto the adenine at position 37 in tRNAs that read codons beginning with uridine, leading to the formation of N6-(dimethylallyl)adenosine (i(6)A). The chain is tRNA dimethylallyltransferase from Staphylococcus saprophyticus subsp. saprophyticus (strain ATCC 15305 / DSM 20229 / NCIMB 8711 / NCTC 7292 / S-41).